We begin with the raw amino-acid sequence, 89 residues long: UPF0223 protein BAMEG_4214 (89 aa).

Belongs to the UPF0223 family.

The sequence is that of UPF0223 protein BAMEG_4214 from Bacillus anthracis (strain CDC 684 / NRRL 3495).